The following is a 143-amino-acid chain: AP-4 complex subunit sigma (143 aa).

Belongs to the adaptor complexes small subunit family. As to quaternary structure, adaptor protein complex 4 (AP-4) is a heterotetramer composed of two large adaptins (epsilon-type subunit and beta-type subunit), a medium adaptin (mu-type subunit) and a small adaptin (sigma-type subunit). Interacts with EHD2.

The protein localises to the golgi apparatus. It localises to the trans-Golgi network. It is found in the membrane. The protein resides in the coated pit. Functionally, subunit of novel type of clathrin- or non-clathrin-associated protein coat involved in targeting proteins from the trans-Golgi network (TGN) to the endosomal-lysosomal system. This chain is AP-4 complex subunit sigma, found in Arabidopsis thaliana (Mouse-ear cress).